We begin with the raw amino-acid sequence, 535 residues long: Intercellular adhesion molecule 1 (535 aa).

The N-terminal stretch at 1–27 (MALGAAPAAQLALLALLGTLLPGPGGA) is a signal peptide. Topologically, residues 28–480 (GISIHPSKAI…LNVLHGQNIL (453 aa)) are extracellular. The Ig-like C2-type 1 domain maps to 41–102 (GDSLTVNCSN…SNCHKEQTIA (62 aa)). Residue Asn47 is glycosylated (N-linked (GlcNAc...) asparagine). Disulfide bonds link Cys48–Cys91 and Cys52–Cys95. 2 N-linked (GlcNAc...) asparagine glycosylation sites follow: Asn105 and Asn131. The Ig-like C2-type 2 domain maps to 127-193 (GEELNLSCLV…FSCRWELDLR (67 aa)). Residues Cys134 and Cys186 are joined by a disulfide bond. A Cell attachment site; atypical motif is present at residues 151-153 (RGE). N-linked (GlcNAc...) asparagine glycosylation is found at Asn183, Asn202, Asn236, Asn262, Asn302, Asn341, Asn357, Asn366, Asn404, and Asn428. Residues 230–295 (GSRWPVNCTL…LKCSVTLGEV (66 aa)) enclose the Ig-like C2-type 3 domain. Cys237 and Cys288 form a disulfide bridge. The 54-residue stretch at 323–376 (WTTVTVECVTRDGAVVKLNGTSAVPPGPRAQLKLNASASDHRSNFSCSAALEIA) folds into the Ig-like C2-type 4 domain. 4 disulfides stabilise this stretch: Cys330-Cys369, Cys401-Cys417, Cys417-Cys456, and Cys429-Cys456. An Ig-like C2-type 5 domain is found at 410–463 (GSEQTLKCEAQGNPIPKLNCSRKGDGASLPIGDLRPVRREVAGTYLCRATSARG). The helical transmembrane segment at 481-503 (DIVIPVVAVTLILGALGTAGYVY) threads the bilayer. Residues 504–535 (NYQRKIQKYELQKARKAQEEAALKLNAQSTPP) lie on the Cytoplasmic side of the membrane. Thr533 carries the post-translational modification Phosphothreonine.

This sequence belongs to the immunoglobulin superfamily. ICAM family. As to quaternary structure, homodimer. Interacts with MUC1 and promotes cell aggregation in epithelial cells. Interacts with ARHGEF26/SGEF. Interacts (on T cell side) with CD81, CD247 and CD9 at immunological synapses between antigen-presenting cells and T cells. In terms of processing, monoubiquitinated, which is promoted by MARCH9 and leads to endocytosis.

It localises to the membrane. ICAM proteins are ligands for the leukocyte adhesion protein LFA-1 (integrin alpha-L/beta-2). During leukocyte trans-endothelial migration, ICAM1 engagement promotes the assembly of endothelial apical cups through ARHGEF26/SGEF and RHOG activation. This is Intercellular adhesion molecule 1 (ICAM1) from Bos taurus (Bovine).